The primary structure comprises 114 residues: Iron-sulfur cluster insertion protein ErpA (114 aa).

Residues C42, C106, and C108 each contribute to the iron-sulfur cluster site.

It belongs to the HesB/IscA family. In terms of assembly, homodimer. Requires iron-sulfur cluster as cofactor.

Required for insertion of 4Fe-4S clusters for at least IspG. This chain is Iron-sulfur cluster insertion protein ErpA, found in Buchnera aphidicola subsp. Acyrthosiphon pisum (strain 5A).